A 152-amino-acid chain; its full sequence is Ribosome maturation factor RimP (152 aa).

It belongs to the RimP family.

The protein resides in the cytoplasm. Functionally, required for maturation of 30S ribosomal subunits. The polypeptide is Ribosome maturation factor RimP (Brevibacillus brevis (strain 47 / JCM 6285 / NBRC 100599)).